We begin with the raw amino-acid sequence, 253 residues long: A-type ATP synthase subunit B (253 aa).

This sequence belongs to the ATPase alpha/beta chains family. In terms of assembly, has multiple subunits with at least A(3), B(3), C, D, E, F, H, I and proteolipid K(x).

The protein resides in the cell membrane. Functionally, component of the A-type ATP synthase that produces ATP from ADP in the presence of a proton gradient across the membrane. The B chain is a regulatory subunit. The protein is A-type ATP synthase subunit B of Methanothermococcus thermolithotrophicus (Methanococcus thermolithotrophicus).